The primary structure comprises 610 residues: MTDCFDSKEFLKTVTSQPGVYRMYDKAGTVIYVGKAKDLKKRLTSYFRAHVASRKTETLVKNIAQIDVTVTHTETEALLLEHNYIKLYQPRYNVLLRDDKSYPLIFLSADKHPRLAIHRGAKHEKGEYFGPFPNSYAVRETLALLQKLFPVRQCENSVYRNRSRPCLQYQIGRCSGPCVPGLVSEEEYQRQVDYVRLFLSGKDQQVLTQLISRMEEASRLLHFEDAARIRDQIQAVRRVTEQQFVSGDSEDLDVIGVAFDAGLACVHVLFIRQGKVLGSRSYFPKVPAGTELSEVVQTFVGQFYLQGSQVRTLPGEILLDFTLAEKDLLASSLSELAGRKIQIQSRPRGDRARYLKLARTNASTALVTRLSQQSTIHQRMKELAKILNLDEINRMECFDISHTMGEQTVASCVVFDANGPVRSEYRRYNISGITPGDDYAAMSQVLKRRYGKALDDKKIPDVIFIDGGKGQLSQAFDVFASLNVPWDKQKPLLVGVAKGSDRKAGLETLFLAAEGEGFSLPPDSPALHLIQHIRDDSHHHAITGHRQRRSKVKNTSALELIEGVGPKRRQILLKYMGGLQPLLNASVEEIAKVPSISQALAEKIYNALKH.

Residues 16-94 form the GIY-YIG domain; the sequence is SQPGVYRMYD…IKLYQPRYNV (79 aa). Positions 204 to 239 constitute a UVR domain; the sequence is QQVLTQLISRMEEASRLLHFEDAARIRDQIQAVRRV.

Belongs to the UvrC family. As to quaternary structure, interacts with UvrB in an incision complex.

Its subcellular location is the cytoplasm. The UvrABC repair system catalyzes the recognition and processing of DNA lesions. UvrC both incises the 5' and 3' sides of the lesion. The N-terminal half is responsible for the 3' incision and the C-terminal half is responsible for the 5' incision. The protein is UvrABC system protein C of Yersinia enterocolitica serotype O:8 / biotype 1B (strain NCTC 13174 / 8081).